We begin with the raw amino-acid sequence, 209 residues long: MGKCQVISHPLIQHKLSILRREDTSTKNFRELVNEIAMLMGYEVSRDLPLEDVEIQTPVAKTIQKQLTGKKLAIVPILRAGIGMVDGFLSLVPAAKVGHIGMYRDEETLEPVEYLVKLPEDIDQRQIFVVDPMLATGGSAILAVDSLKKRGAGNIKFVCLVAAPEGVKKLQEAHPDVDIYTAALDEKLNEHGYIVPGLGDAGDRLFGTK.

5-phospho-alpha-D-ribose 1-diphosphate is bound by residues Arg-79, Arg-104, and 131–139 (DPMLATGGS). Residues Ile-194 and 199-201 (GDA) contribute to the uracil site. Asp-200 is a 5-phospho-alpha-D-ribose 1-diphosphate binding site.

This sequence belongs to the UPRTase family. The cofactor is Mg(2+).

It catalyses the reaction UMP + diphosphate = 5-phospho-alpha-D-ribose 1-diphosphate + uracil. The protein operates within pyrimidine metabolism; UMP biosynthesis via salvage pathway; UMP from uracil: step 1/1. Its activity is regulated as follows. Allosterically activated by GTP. Its function is as follows. Catalyzes the conversion of uracil and 5-phospho-alpha-D-ribose 1-diphosphate (PRPP) to UMP and diphosphate. This Streptococcus uberis (strain ATCC BAA-854 / 0140J) protein is Uracil phosphoribosyltransferase.